The sequence spans 403 residues: Phosphopentomutase (403 aa).

Mn(2+) contacts are provided by aspartate 13, aspartate 298, histidine 303, aspartate 339, histidine 340, and histidine 351.

It belongs to the phosphopentomutase family. Mn(2+) is required as a cofactor.

Its subcellular location is the cytoplasm. The enzyme catalyses 2-deoxy-alpha-D-ribose 1-phosphate = 2-deoxy-D-ribose 5-phosphate. It carries out the reaction alpha-D-ribose 1-phosphate = D-ribose 5-phosphate. It functions in the pathway carbohydrate degradation; 2-deoxy-D-ribose 1-phosphate degradation; D-glyceraldehyde 3-phosphate and acetaldehyde from 2-deoxy-alpha-D-ribose 1-phosphate: step 1/2. Functionally, isomerase that catalyzes the conversion of deoxy-ribose 1-phosphate (dRib-1-P) and ribose 1-phosphate (Rib-1-P) to deoxy-ribose 5-phosphate (dRib-5-P) and ribose 5-phosphate (Rib-5-P), respectively. This chain is Phosphopentomutase, found in Streptococcus pneumoniae serotype 19F (strain G54).